We begin with the raw amino-acid sequence, 229 residues long: 2-C-methyl-D-erythritol 4-phosphate cytidylyltransferase (229 aa).

Belongs to the IspD/TarI cytidylyltransferase family. IspD subfamily.

It carries out the reaction 2-C-methyl-D-erythritol 4-phosphate + CTP + H(+) = 4-CDP-2-C-methyl-D-erythritol + diphosphate. It participates in isoprenoid biosynthesis; isopentenyl diphosphate biosynthesis via DXP pathway; isopentenyl diphosphate from 1-deoxy-D-xylulose 5-phosphate: step 2/6. Functionally, catalyzes the formation of 4-diphosphocytidyl-2-C-methyl-D-erythritol from CTP and 2-C-methyl-D-erythritol 4-phosphate (MEP). The chain is 2-C-methyl-D-erythritol 4-phosphate cytidylyltransferase from Shouchella clausii (strain KSM-K16) (Alkalihalobacillus clausii).